Reading from the N-terminus, the 149-residue chain is Calmodulin-1 (149 aa).

Ala2 bears the N-acetylalanine mark. 4 consecutive EF-hand domains span residues 8-43, 44-79, 81-116, and 117-149; these read EQIA…LGQN, PTEA…KMKD, DSEE…LGEK, and LTDE…MLAK. The Ca(2+) site is built by Asp21, Asp23, Asp25, Cys27, Glu32, Asp57, Asp59, Asn61, Thr63, Glu68, Asp94, Asp96, Asn98, and Glu105. N6,N6,N6-trimethyllysine is present on Lys116. Residues Asp130, Asp132, Asp134, Gln136, and Glu141 each coordinate Ca(2+).

The protein belongs to the calmodulin family. In terms of tissue distribution, high expression in stolon tips and stems, moderate in roots, and very low in leaves. Localized in the meristematic regions of the shoot and root tips, the tip of the developing tuber and the vascular zones of petiole and tuber. Not detected in mesophyll cells.

In terms of biological role, calmodulin mediates the control of a large number of enzymes, ion channels and other proteins by Ca(2+). Among the enzymes to be stimulated by the calmodulin-Ca(2+) complex are a number of protein kinases and phosphatases. The chain is Calmodulin-1 (PCM1) from Solanum tuberosum (Potato).